Consider the following 466-residue polypeptide: Histidine--tRNA ligase (466 aa).

It belongs to the class-II aminoacyl-tRNA synthetase family. As to quaternary structure, homodimer.

It localises to the cytoplasm. It catalyses the reaction tRNA(His) + L-histidine + ATP = L-histidyl-tRNA(His) + AMP + diphosphate + H(+). This is Histidine--tRNA ligase (hisS) from Bifidobacterium longum (strain NCC 2705).